The following is a 128-amino-acid chain: Type-4 ice-structuring protein LS-12 (128 aa).

Residues 1–20 form the signal peptide; it reads MKFSLVATIVLLALAQGSFA. Position 21 is a pyrrolidone carboxylic acid (Q21).

This sequence belongs to the apolipoprotein A1/A4/E family.

Its subcellular location is the secreted. In terms of biological role, antifreeze proteins lower the blood freezing point. The protein is Type-4 ice-structuring protein LS-12 of Myoxocephalus octodecemspinosus (Longhorn sculpin).